We begin with the raw amino-acid sequence, 357 residues long: Pheromone receptor 1 (357 aa).

The next 7 membrane-spanning stretches (helical) occupy residues 5-25 (ITPFFALVAFFLVLMPFAWHI), 32-52 (LIMLSIWLMLGNLDNFVNSMV), 67-90 (LSVRLRHLLFIAIPASNLAIARKL), 110-130 (VIIDLLICLGIPIIYTSLMIV), 145-165 (WPMMVFSWLWVLLVAAPVIVV), 206-226 (LLLLTAIDMLLFFPIYVGTIA), and 268-288 (LILARLVCPLSAYIFFAMFGL). Positions 338–357 (ANTSTKSEKSDIDMRGSEAA) are disordered. The span at 343–357 (KSEKSDIDMRGSEAA) shows a compositional bias: basic and acidic residues.

This sequence belongs to the G-protein coupled receptor 4 family.

The protein localises to the membrane. Functionally, receptor for the A2 pheromone, a prenylated mating factor. The polypeptide is Pheromone receptor 1 (PRA1) (Mycosarcoma maydis (Corn smut fungus)).